Here is a 412-residue protein sequence, read N- to C-terminus: Argininosuccinate synthase (412 aa).

ATP is bound by residues 16 to 24 (AYSGGLDTS) and Ala-44. The L-citrulline site is built by Tyr-96 and Ser-101. Position 126 (Gly-126) interacts with ATP. The L-aspartate site is built by Thr-128, Asn-132, and Asp-133. Residue Asn-132 participates in L-citrulline binding. L-citrulline-binding residues include Arg-136, Ser-185, Ser-194, Glu-270, and Tyr-282.

It belongs to the argininosuccinate synthase family. Type 1 subfamily. In terms of assembly, homotetramer.

It is found in the cytoplasm. It catalyses the reaction L-citrulline + L-aspartate + ATP = 2-(N(omega)-L-arginino)succinate + AMP + diphosphate + H(+). It participates in amino-acid biosynthesis; L-arginine biosynthesis; L-arginine from L-ornithine and carbamoyl phosphate: step 2/3. The polypeptide is Argininosuccinate synthase (Shewanella baltica (strain OS195)).